A 126-amino-acid chain; its full sequence is Large ribosomal subunit protein bL12 (126 aa).

This sequence belongs to the bacterial ribosomal protein bL12 family. As to quaternary structure, homodimer. Part of the ribosomal stalk of the 50S ribosomal subunit. Forms a multimeric L10(L12)X complex, where L10 forms an elongated spine to which 2 to 4 L12 dimers bind in a sequential fashion. Binds GTP-bound translation factors.

Forms part of the ribosomal stalk which helps the ribosome interact with GTP-bound translation factors. Is thus essential for accurate translation. This is Large ribosomal subunit protein bL12 from Acidobacterium capsulatum (strain ATCC 51196 / DSM 11244 / BCRC 80197 / JCM 7670 / NBRC 15755 / NCIMB 13165 / 161).